Here is a 64-residue protein sequence, read N- to C-terminus: Large ribosomal subunit protein uL30 (64 aa).

The protein belongs to the universal ribosomal protein uL30 family. As to quaternary structure, part of the 50S ribosomal subunit.

The chain is Large ribosomal subunit protein uL30 from Bdellovibrio bacteriovorus (strain ATCC 15356 / DSM 50701 / NCIMB 9529 / HD100).